Reading from the N-terminus, the 201-residue chain is FMN-dependent NADH:quinone oxidoreductase (201 aa).

Residues Ser-10, 16 to 18, 96 to 99, and 140 to 143 each bind FMN; these read SQS, MYNF, and SRGG.

Belongs to the azoreductase type 1 family. In terms of assembly, homodimer. Requires FMN as cofactor.

The catalysed reaction is 2 a quinone + NADH + H(+) = 2 a 1,4-benzosemiquinone + NAD(+). The enzyme catalyses N,N-dimethyl-1,4-phenylenediamine + anthranilate + 2 NAD(+) = 2-(4-dimethylaminophenyl)diazenylbenzoate + 2 NADH + 2 H(+). In terms of biological role, quinone reductase that provides resistance to thiol-specific stress caused by electrophilic quinones. Functionally, also exhibits azoreductase activity. Catalyzes the reductive cleavage of the azo bond in aromatic azo compounds to the corresponding amines. This Escherichia coli O6:K15:H31 (strain 536 / UPEC) protein is FMN-dependent NADH:quinone oxidoreductase.